Consider the following 391-residue polypeptide: Probable tRNA sulfurtransferase (391 aa).

The region spanning 60-167 (DETVAALQRV…NKAYVYSNTL (108 aa)) is the THUMP domain. ATP is bound by residues 184–185 (LL), 209–210 (YF), Arg-266, Gly-288, and Gln-297.

This sequence belongs to the ThiI family.

The protein resides in the cytoplasm. It carries out the reaction [ThiI sulfur-carrier protein]-S-sulfanyl-L-cysteine + a uridine in tRNA + 2 reduced [2Fe-2S]-[ferredoxin] + ATP + H(+) = [ThiI sulfur-carrier protein]-L-cysteine + a 4-thiouridine in tRNA + 2 oxidized [2Fe-2S]-[ferredoxin] + AMP + diphosphate. The catalysed reaction is [ThiS sulfur-carrier protein]-C-terminal Gly-Gly-AMP + S-sulfanyl-L-cysteinyl-[cysteine desulfurase] + AH2 = [ThiS sulfur-carrier protein]-C-terminal-Gly-aminoethanethioate + L-cysteinyl-[cysteine desulfurase] + A + AMP + 2 H(+). Its pathway is cofactor biosynthesis; thiamine diphosphate biosynthesis. Its function is as follows. Catalyzes the ATP-dependent transfer of a sulfur to tRNA to produce 4-thiouridine in position 8 of tRNAs, which functions as a near-UV photosensor. Also catalyzes the transfer of sulfur to the sulfur carrier protein ThiS, forming ThiS-thiocarboxylate. This is a step in the synthesis of thiazole, in the thiamine biosynthesis pathway. The sulfur is donated as persulfide by IscS. The sequence is that of Probable tRNA sulfurtransferase from Lachnoclostridium phytofermentans (strain ATCC 700394 / DSM 18823 / ISDg) (Clostridium phytofermentans).